Reading from the N-terminus, the 421-residue chain is TITAN-like protein (421 aa).

A C2H2-type 1; degenerate zinc finger spans residues 11-32; the sequence is EFCTVCRFHHDQGSRHKYFPRH. Residues 70-100 form a C2H2-type 2; degenerate zinc finger; the sequence is VWCVFCDEDIVELGSSFACSKAINHFASSDH. Residues 279-306 form a disordered region; that stretch reads ISSSHSTDAGGNVHSGAPPPWLDANDGD. 2 short sequence motifs (nuclear localization signal) span residues 328 to 335 and 377 to 384; these read NRKLNPNR and TRKESRKE. The disordered stretch occupies residues 376–421; the sequence is GTRKESRKEFEKEKRKLVKTESISTESEPVKIQPYISKRARRESGE. A compositionally biased stretch (basic and acidic residues) spans 377–389; the sequence is TRKESRKEFEKEK.

Also present in cotyledons, hypocotyls, stems, veins of sepals and stigmas, and actively dividing tissues such as shoot apical meristem, root tips and emerging true leaves. Weak expression in petals and anthers, and not detected in mature leaves. In seeds, expressed in both the endosperm and embryo.

It localises to the nucleus. Its function is as follows. Key regulator for endosperm and embryo nuclear divisions. The sequence is that of TITAN-like protein from Arabidopsis thaliana (Mouse-ear cress).